A 276-amino-acid polypeptide reads, in one-letter code: Omega-amidase NIT2 (276 aa).

A CN hydrolase domain is found at 4–248; that stretch reads FRLALIQLQV…ETILYSDIDL (245 aa). Phosphoserine is present on S26. E43 (proton acceptor) is an active-site residue. N6-acetyllysine; alternate is present on K68. K68 carries the N6-succinyllysine; alternate modification. Catalysis depends on K112, which acts as the Proton donor. Residues K123 and K130 each carry the N6-succinyllysine modification. C153 functions as the Nucleophile in the catalytic mechanism.

This sequence belongs to the carbon-nitrogen hydrolase superfamily. NIT1/NIT2 family. As to quaternary structure, homodimer.

It localises to the cytoplasm. It catalyses the reaction a monoamide of a dicarboxylate + H2O = a dicarboxylate + NH4(+). It carries out the reaction 2-oxoglutaramate + H2O = 2-oxoglutarate + NH4(+). The catalysed reaction is 2-oxosuccinamate + H2O = oxaloacetate + NH4(+). Has omega-amidase activity. The role of omega-amidase is to remove potentially toxic intermediates by converting 2-oxoglutaramate and 2-oxosuccinamate to biologically useful 2-oxoglutarate and oxaloacetate, respectively. Can also hydrolyze gamma-monomethyl-alpha-ketoglutarate in vitro. The polypeptide is Omega-amidase NIT2 (Mus musculus (Mouse)).